The chain runs to 611 residues: Phosphomethylpyrimidine synthase (611 aa).

Residues asparagine 212, methionine 241, tyrosine 270, histidine 306, 326-328 (SRG), 367-370 (DGLR), and glutamate 406 contribute to the substrate site. Position 410 (histidine 410) interacts with Zn(2+). Tyrosine 433 is a substrate binding site. Zn(2+) is bound at residue histidine 474. 3 residues coordinate [4Fe-4S] cluster: cysteine 554, cysteine 557, and cysteine 562.

The protein belongs to the ThiC family. In terms of assembly, homodimer. Requires [4Fe-4S] cluster as cofactor.

The catalysed reaction is 5-amino-1-(5-phospho-beta-D-ribosyl)imidazole + S-adenosyl-L-methionine = 4-amino-2-methyl-5-(phosphooxymethyl)pyrimidine + CO + 5'-deoxyadenosine + formate + L-methionine + 3 H(+). The protein operates within cofactor biosynthesis; thiamine diphosphate biosynthesis. Its function is as follows. Catalyzes the synthesis of the hydroxymethylpyrimidine phosphate (HMP-P) moiety of thiamine from aminoimidazole ribotide (AIR) in a radical S-adenosyl-L-methionine (SAM)-dependent reaction. The sequence is that of Phosphomethylpyrimidine synthase from Bartonella bacilliformis (strain ATCC 35685 / KC583 / Herrer 020/F12,63).